The primary structure comprises 603 residues: Iron-sulfur clusters transporter ATM1, mitochondrial (603 aa).

Residues 20–41 form a helical membrane-spanning segment; that stretch reads VLLAVGLLVGGKVLNVQVPFFF. One can recognise an ABC transmembrane type-1 domain in the interval 20–310; the sequence is VLLAVGLLVG…LGSVYRELRQ (291 aa). Topologically, residues 42-64 are mitochondrial intermembrane; the sequence is REIVDSLNVDIAATGGTVATVAG. The chain crosses the membrane as a helical span at residues 65-88; the sequence is TMIFAYGASRIGAVVSQELRNAVF. Topologically, residues 89–137 are mitochondrial matrix; it reads SSVAQKAIRRVATRTFGHLLNLDLNFHLSKQTGGLTRAIDRGTKGISFL. A helical transmembrane segment spans residues 138–161; that stretch reads LTSMVFHIVPTALEISMVCGILTY. Position 162 (glutamine 162) is a topological domain, mitochondrial intermembrane. A helical membrane pass occupies residues 163–183; sequence FGWEFAAVTALTMSAYTAFTI. Over 184-249 the chain is Mitochondrial matrix; it reads WTTAWRTKFR…SSIKVATSLA (66 aa). Residues 189–193 and 252–255 contribute to the glutathione site; these read RTKFR and NSGQ. The chain crosses the membrane as a helical span at residues 250 to 268; that stretch reads FLNSGQNIIFSSALTIMMW. Residues 269 to 283 lie on the Mitochondrial intermembrane side of the membrane; it reads LGAKGIVAGSLSVGD. The chain crosses the membrane as a helical span at residues 284–305; sequence LVLINQLVFQLSVPLNFLGSVY. Glycine 302 provides a ligand contact to glutathione. At 306 to 603 the chain is on the mitochondrial matrix side; sequence RELRQSLLDM…SEREAPVPVK (298 aa). The ABC transporter domain maps to 345 to 581; sequence IRFDNVSFGY…NGLYTELWMA (237 aa). ATP is bound by residues tyrosine 354 and 378 to 389; that span reads GPSGCGKSTLLR.

Belongs to the ABC transporter superfamily. ABCB family. Heavy Metal importer (TC 3.A.1.210) subfamily. As to quaternary structure, homodimer.

Its subcellular location is the mitochondrion inner membrane. Functionally, performs an essential function in the generation of cytoplasmic iron-sulfur proteins by mediating the ATP-dependent export of Fe/S cluster precursors synthesized by NFS1 and other mitochondrial proteins. Hydrolyzes ATP. Binds glutathione and may function by transporting a glutathione-conjugated iron-sulfur compound. This chain is Iron-sulfur clusters transporter ATM1, mitochondrial, found in Chaetomium globosum (strain ATCC 6205 / CBS 148.51 / DSM 1962 / NBRC 6347 / NRRL 1970) (Soil fungus).